A 140-amino-acid chain; its full sequence is Oleosin Cor a 13 (140 aa).

2 helical membrane passes run 31–51 (GSLL…LTLA) and 75–95 (GFLA…WIYR).

The protein belongs to the oleosin family. As to expression, expressed in seeds.

It localises to the lipid droplet. The protein resides in the membrane. Its function is as follows. May have a structural role to stabilize the lipid body during desiccation of the seed by preventing coalescence of the oil. Probably interacts with both lipid and phospholipid moieties of lipid bodies. May also provide recognition signals for specific lipase anchorage in lipolysis during seedling growth. In Corylus avellana (European hazel), this protein is Oleosin Cor a 13.